Consider the following 183-residue polypeptide: Ribose 1,5-bisphosphate phosphokinase PhnN (183 aa).

The protein belongs to the ribose 1,5-bisphosphokinase family.

The enzyme catalyses alpha-D-ribose 1,5-bisphosphate + ATP = 5-phospho-alpha-D-ribose 1-diphosphate + ADP. It functions in the pathway metabolic intermediate biosynthesis; 5-phospho-alpha-D-ribose 1-diphosphate biosynthesis; 5-phospho-alpha-D-ribose 1-diphosphate from D-ribose 5-phosphate (route II): step 3/3. In terms of biological role, catalyzes the phosphorylation of ribose 1,5-bisphosphate to 5-phospho-D-ribosyl alpha-1-diphosphate (PRPP). The sequence is that of Ribose 1,5-bisphosphate phosphokinase PhnN from Azotobacter vinelandii (strain DJ / ATCC BAA-1303).